Consider the following 431-residue polypeptide: Adenylosuccinate synthetase (431 aa).

GTP contacts are provided by residues 13-19 and 41-43; these read GDEGKGK and GHT. The Proton acceptor role is filled by D14. D14 and G41 together coordinate Mg(2+). Residues 14–17, 39–42, T130, R144, Q225, T240, and R304 contribute to the IMP site; these read DEGK and NAGH. Catalysis depends on H42, which acts as the Proton donor. Residue 300-306 coordinates substrate; it reads ATTGRKR. Residues R306, 332–334, and 415–417 each bind GTP; these read KLD and STG.

This sequence belongs to the adenylosuccinate synthetase family. Homodimer. The cofactor is Mg(2+).

It is found in the cytoplasm. The catalysed reaction is IMP + L-aspartate + GTP = N(6)-(1,2-dicarboxyethyl)-AMP + GDP + phosphate + 2 H(+). It functions in the pathway purine metabolism; AMP biosynthesis via de novo pathway; AMP from IMP: step 1/2. Its function is as follows. Plays an important role in the de novo pathway of purine nucleotide biosynthesis. Catalyzes the first committed step in the biosynthesis of AMP from IMP. The chain is Adenylosuccinate synthetase from Shewanella oneidensis (strain ATCC 700550 / JCM 31522 / CIP 106686 / LMG 19005 / NCIMB 14063 / MR-1).